A 217-amino-acid polypeptide reads, in one-letter code: NADPH-dependent 3-demethoxyubiquinone 3-hydroxylase, mitochondrial (217 aa).

2 repeat units span residues 49–130 (IIER…SALM) and 131–217 (GKEA…STRV). The segment at 49–217 (IIERIIRVDH…KTAIWLSTRV (169 aa)) is 2 X approximate tandem repeats. Arg-52 lines the NADH pocket. Glu-61, Glu-91, His-94, Glu-143, Glu-178, and His-181 together coordinate Fe cation. Residue Arg-216 coordinates NADH.

It belongs to the COQ7 family. Component of a multi-subunit COQ enzyme complex. It depends on Fe cation as a cofactor.

Its subcellular location is the mitochondrion inner membrane. The enzyme catalyses a 5-methoxy-2-methyl-3-(all-trans-polyprenyl)benzoquinone + NADH + O2 = a 3-demethylubiquinone + NAD(+) + H2O. It functions in the pathway cofactor biosynthesis; ubiquinone biosynthesis. Functionally, catalyzes the hydroxylation of the 5-methoxy-2-methyl-3-(all-trans-polyprenyl)benzoquinone at the C6 position and participates in the biosynthesis of ubiquinone. Catalyzes the reaction through a substrate-mediated reduction pathway, whereby NADH shuttles electrons to 5-methoxy-2-methyl-3-(all-trans-decaprenyl)benzoquinone, which then transfers the electrons to the two Fe(3+) centers. The binding of 5-methoxy-2-methyl-3-(all-trans-polyprenyl)benzoquinone (DMQn) mediates reduction of the diiron center by nicotinamide adenine dinucleotide (NADH) and initiates oxygen activation for subsequent DMQ hydroxylation. Also has a structural role in the COQ enzyme complex, stabilizing other COQ polypeptides. This Dictyostelium discoideum (Social amoeba) protein is NADPH-dependent 3-demethoxyubiquinone 3-hydroxylase, mitochondrial.